The following is a 71-amino-acid chain: Small ribosomal subunit protein bS21 (71 aa).

Positions Lys40–Tyr71 are disordered. Over residues Arg45 to Tyr71 the composition is skewed to basic residues.

This sequence belongs to the bacterial ribosomal protein bS21 family.

This chain is Small ribosomal subunit protein bS21, found in Xylella fastidiosa (strain M23).